The sequence spans 130 residues: U-scoloptoxin(17)-Er1a (130 aa).

Positions 1–18 are cleaved as a signal peptide; the sequence is MKLLVFALFLQVVQLSLA.

Belongs to the scoloptoxin-17 family. Contains 4 disulfide bonds. Expressed by the venom gland.

It localises to the secreted. This chain is U-scoloptoxin(17)-Er1a, found in Ethmostigmus rubripes (Giant centipede).